The sequence spans 241 residues: Probable transcriptional regulatory protein LHK_02347 (241 aa).

The protein belongs to the TACO1 family.

It is found in the cytoplasm. In Laribacter hongkongensis (strain HLHK9), this protein is Probable transcriptional regulatory protein LHK_02347.